The sequence spans 407 residues: Putative mannan endo-1,4-beta-mannosidase 9 (407 aa).

Residues 1 to 31 (MGSKRRVILLPTLGVVVLAIAAAVLLHAGEA) form the signal peptide. Residues Trp95 and Asn208 each contribute to the substrate site. Glu209 serves as the catalytic Proton donor. Tyr284 contributes to the substrate binding site. Glu324 acts as the Nucleophile in catalysis. Trp366 is a binding site for substrate.

This sequence belongs to the glycosyl hydrolase 5 (cellulase A) family. In terms of tissue distribution, expression not detected.

The protein resides in the secreted. It catalyses the reaction Random hydrolysis of (1-&gt;4)-beta-D-mannosidic linkages in mannans, galactomannans and glucomannans.. This chain is Putative mannan endo-1,4-beta-mannosidase 9 (MAN9), found in Oryza sativa subsp. japonica (Rice).